The primary structure comprises 492 residues: Aerolysin-4 (492 aa).

Positions 1–23 (MKKLKITGLSLIISGLLMAQAQA) are cleaved as a signal peptide. Disulfide bonds link C42/C98 and C182/C187. Residues 68-84 (WQISGLANGWVIMGPGY) form an interaction with host N-linked glycan region. The tract at residues 256–288 (YGLSEKVTTKNKFKWPLVGETELSIEIAANQSW) is part of the transmembrane beta-barrel after proteolytic activation of the toxin and insertion into the host membrane. The interval 346–355 (RWGGNAWYTH) is interaction with glycans from host GPI-anchor. Positions 446 to 492 (AAASHSSRARNLSAGQGLRLEIPLDAQELSGLGFNNVSLSVTPAANQ) are excised as a propeptide.

It belongs to the aerolysin family. In terms of assembly, homodimer in solution; homoheptamer in the host membrane. After binding to GPI-anchored proteins in target membranes and proteolytic removal of the C-terminal propeptide, the protein assembles into a heptameric pre-pore complex. A further conformation change leads to insertion into the host membrane. Post-translationally, proteolytic cleavage and subsequent release of the propeptide trigger a major conformation change, leading to the formation of a heptameric pre-pore that then inserts into the host membrane.

Its subcellular location is the secreted. It is found in the host cell membrane. Secreted, cytolytic toxin that forms pores in host membranes after proteolytic removal of a C-terminal propeptide, leading to destruction of the membrane permeability barrier and cell death. The pores are formed by transmembrane beta-strands and are approximately 3 nm in diameter. In Aeromonas hydrophila, this protein is Aerolysin-4 (ahh4).